Consider the following 473-residue polypeptide: Spliceosome-associated protein CWC27 homolog (473 aa).

At Ser-2 the chain carries N-acetylserine. Positions 11–166 (TNGKVLLKTT…NSHKIRSCEV (156 aa)) constitute a PPIase cyclophilin-type domain. The segment covering 178 to 193 (EIKKPKKEKPEEEVKK) has biased composition (basic and acidic residues). 3 disordered regions span residues 178–197 (EIKKPKKEKPEEEVKKLKPK), 203–383 (SLLS…TSRE), and 401–473 (IAET…KERR). Positions 206–230 (SFGEEAEEEEEEVNRVSQSMKGKSK) form a coiled coil. Residues 231–241 (SSHDLLKDDPH) are compositionally biased toward basic and acidic residues. The Cell attachment site signature appears at 252–254 (RGD). A compositionally biased stretch (acidic residues) spans 256 to 266 (AEDSDDDGEYE). 2 stretches are compositionally biased toward basic and acidic residues: residues 267–348 (GAEH…KRSE) and 360–372 (EYRREKQKYEALR). A coiled-coil region spans residues 311-378 (VSRSEELRKE…EALRKQQAKT (68 aa)). Residue Ser-347 is modified to Phosphoserine. Residues 405–419 (PENDISETEVEDDEG) are compositionally biased toward acidic residues. Basic and acidic residues-rich tracts occupy residues 426–438 (QFEDKSRKVKDAS) and 458–473 (RREESKKLMREKKERR).

Belongs to the cyclophilin-type PPIase family. Part of the activated spliceosome B/catalytic step 1 spliceosome, one of the forms of the spliceosome which has a well-formed active site but still cannot catalyze the branching reaction and is composed at least of 52 proteins, the U2, U5 and U6 snRNAs and the pre-mRNA. Recruited during early steps of activated spliceosome B maturation, it is probably one of the first proteins released from this complex as he matures to the spliceosome C complex. Component of the minor spliceosome, which splices U12-type introns.

It localises to the nucleus. Its function is as follows. As part of the spliceosome, plays a role in pre-mRNA splicing. Probable inactive PPIase with no peptidyl-prolyl cis-trans isomerase activity. As a component of the minor spliceosome, involved in the splicing of U12-type introns in pre-mRNAs. The sequence is that of Spliceosome-associated protein CWC27 homolog from Bos taurus (Bovine).